Consider the following 305-residue polypeptide: tRNA dimethylallyltransferase (305 aa).

11 to 18 contributes to the ATP binding site; that stretch reads GPTAVGKT. A substrate-binding site is contributed by 13-18; sequence TAVGKT. Residues 36 to 39 form an interaction with substrate tRNA region; sequence DSMQ.

It belongs to the IPP transferase family. Monomer. It depends on Mg(2+) as a cofactor.

It catalyses the reaction adenosine(37) in tRNA + dimethylallyl diphosphate = N(6)-dimethylallyladenosine(37) in tRNA + diphosphate. Catalyzes the transfer of a dimethylallyl group onto the adenine at position 37 in tRNAs that read codons beginning with uridine, leading to the formation of N6-(dimethylallyl)adenosine (i(6)A). The chain is tRNA dimethylallyltransferase from Listeria monocytogenes serotype 4a (strain HCC23).